Here is a 401-residue protein sequence, read N- to C-terminus: Phosphonopyruvate decarboxylase (401 aa).

Residues 382–401 form a disordered region; it reads WPASAVGSGTRAAAGSAGDR. Residues 384–401 are compositionally biased toward low complexity; sequence ASAVGSGTRAAAGSAGDR.

It belongs to the TPP enzyme family. Requires thiamine diphosphate as cofactor. Mg(2+) serves as cofactor.

The enzyme catalyses 3-phosphonopyruvate + H(+) = phosphonoacetaldehyde + CO2. It functions in the pathway secondary metabolite biosynthesis; bialaphos biosynthesis. Involved in the biosynthesis of phosphinothricin tripeptide (PTT), also known as bialaphos (BA), a natural-product antibiotic and potent herbicide. Catalyzes the decarboxylation of phosphonopyruvate (PnPy) to generate phosphonoacetaldehyde (PnAA). In Streptomyces hygroscopicus, this protein is Phosphonopyruvate decarboxylase.